The primary structure comprises 310 residues: Dopamine receptor-interacting protein 1 (310 aa).

In terms of assembly, interacts with DRD1.

Functionally, could be a regulator of the dopamine receptor signaling pathway. This chain is Dopamine receptor-interacting protein 1, found in Homo sapiens (Human).